The following is a 75-amino-acid chain: Porwaprin-d (75 aa).

An N-terminal signal peptide occupies residues 1–24; the sequence is MSSGGLLLLLGLLTLWAELTPVSS. Residues 27 to 72 form the WAP domain; the sequence is RPKKPGLCPPRPQKPPCVRECKNDWRCPGEQKCCRYGCIYECRDPI. 4 cysteine pairs are disulfide-bonded: cysteine 34/cysteine 60, cysteine 43/cysteine 64, cysteine 47/cysteine 59, and cysteine 53/cysteine 68.

It belongs to the venom waprin family. As to expression, expressed by the venom gland.

The protein resides in the secreted. Its function is as follows. Damages membranes of susceptible bacteria. Has no hemolytic activity. Not toxic to mice. Does not inhibit the proteinases elastase and cathepsin G. This is Porwaprin-d from Pseudechis porphyriacus (Red-bellied black snake).